The primary structure comprises 168 residues: MPRSRINGNFIDKTFSIIANILLRIIPTTSGEKEAFTYYRDGMSAQSEGNYAEALQNYYEAMRLEIDPYDRSYILYNIGLIHTSNGEHTKALEYYFRALERNPFLPQAFNNMAVICHYRGEQAIRQGDSEIAEAWFDQAAEYWKQAIALTPGNYIEAHNWLKITRRFE.

TPR repeat units follow at residues 35-68 (AFTY…EIDP), 72-105 (SYIL…NPFL), and 120-153 (GEQA…TPGN).

Belongs to the Ycf3 family.

Its subcellular location is the plastid. The protein localises to the chloroplast thylakoid membrane. In terms of biological role, essential for the assembly of the photosystem I (PSI) complex. May act as a chaperone-like factor to guide the assembly of the PSI subunits. This Daucus carota (Wild carrot) protein is Photosystem I assembly protein Ycf3.